Consider the following 154-residue polypeptide: Protein phosphatase 1 regulatory subunit 27 (154 aa).

2 ANK repeats span residues 63–92 (SGLAALHEAVLSGNLECVKLLVKYGADIHQ) and 96–125 (AGWTPLHIACSDGYPDIARYLISLGADRDA).

In terms of assembly, interacts with DYSF and PPP1CA.

Functionally, inhibits phosphatase activity of protein phosphatase 1 (PP1) complexes. In Homo sapiens (Human), this protein is Protein phosphatase 1 regulatory subunit 27 (PPP1R27).